We begin with the raw amino-acid sequence, 400 residues long: S-adenosylmethionine synthase (400 aa).

136–141 is an ATP binding site; it reads GQGSVD.

This sequence belongs to the AdoMet synthase 2 family. Mg(2+) serves as cofactor.

The enzyme catalyses L-methionine + ATP + H2O = S-adenosyl-L-methionine + phosphate + diphosphate. The protein operates within amino-acid biosynthesis; S-adenosyl-L-methionine biosynthesis; S-adenosyl-L-methionine from L-methionine: step 1/1. Functionally, catalyzes the formation of S-adenosylmethionine from methionine and ATP. This is S-adenosylmethionine synthase (mat) from Thermoplasma acidophilum (strain ATCC 25905 / DSM 1728 / JCM 9062 / NBRC 15155 / AMRC-C165).